Reading from the N-terminus, the 121-residue chain is Class I hydrophobin 2 (121 aa).

An N-terminal signal peptide occupies residues 1–18 (MQFTTIVMTLAAAVAVTA). Cystine bridges form between C52–C101, C60–C94, C61–C79, and C102–C116. A glycan (N-linked (GlcNAc...) asparagine) is linked at N83.

The protein belongs to the fungal hydrophobin family. As to quaternary structure, self-assembles to form functional amyloid fibrils called rodlets. Self-assembly into fibrillar rodlets occurs spontaneously at hydrophobic:hydrophilic interfaces and the rodlets further associate laterally to form amphipathic monolayers. Expressed in conidia and aerial hyphae.

The protein resides in the secreted. It localises to the cell wall. In terms of biological role, aerial growth, conidiation, and dispersal of filamentous fungi in the environment rely upon a capability of their secreting small amphipathic proteins called hydrophobins (HPBs) with low sequence identity. Class I can self-assemble into an outermost layer of rodlet bundles on aerial cell surfaces, conferring cellular hydrophobicity that supports fungal growth, development and dispersal; whereas Class II form highly ordered films at water-air interfaces through intermolecular interactions but contribute nothing to the rodlet structure. Hcf-2 is a class I hydrophobin that is not necessary for the development of hyphae or conidia but contributes to cell surface hydrophobicity. This Passalora fulva (Tomato leaf mold) protein is Class I hydrophobin 2.